The following is a 287-amino-acid chain: ATP synthase gamma chain (287 aa).

This sequence belongs to the ATPase gamma chain family. In terms of assembly, F-type ATPases have 2 components, CF(1) - the catalytic core - and CF(0) - the membrane proton channel. CF(1) has five subunits: alpha(3), beta(3), gamma(1), delta(1), epsilon(1). CF(0) has three main subunits: a, b and c.

The protein localises to the cell inner membrane. In terms of biological role, produces ATP from ADP in the presence of a proton gradient across the membrane. The gamma chain is believed to be important in regulating ATPase activity and the flow of protons through the CF(0) complex. This Cronobacter sakazakii (strain ATCC BAA-894) (Enterobacter sakazakii) protein is ATP synthase gamma chain.